A 227-amino-acid polypeptide reads, in one-letter code: Cytochrome c oxidase subunit 2 (227 aa).

Residues 1 to 14 are Mitochondrial intermembrane-facing; the sequence is MAYPFQLGLQDATS. Residues 15-45 form a helical membrane-spanning segment; sequence PIMEELTNFHDHTLMIVFLISSLVLYLISLM. Residues 46–59 are Mitochondrial matrix-facing; the sequence is LSTKLIHTSTMDAQ. The chain crosses the membrane as a helical span at residues 60-87; the sequence is EVETIWTILPAIILIMIALPSLRILYMM. Residues 88 to 227 lie on the Mitochondrial intermembrane side of the membrane; the sequence is DEINNPALTV…LFENWSISMS (140 aa). Residues H161, C196, E198, C200, H204, and M207 each coordinate Cu cation. Mg(2+) is bound at residue E198.

Belongs to the cytochrome c oxidase subunit 2 family. Component of the cytochrome c oxidase (complex IV, CIV), a multisubunit enzyme composed of 14 subunits. The complex is composed of a catalytic core of 3 subunits MT-CO1, MT-CO2 and MT-CO3, encoded in the mitochondrial DNA, and 11 supernumerary subunits COX4I, COX5A, COX5B, COX6A, COX6B, COX6C, COX7A, COX7B, COX7C, COX8 and NDUFA4, which are encoded in the nuclear genome. The complex exists as a monomer or a dimer and forms supercomplexes (SCs) in the inner mitochondrial membrane with NADH-ubiquinone oxidoreductase (complex I, CI) and ubiquinol-cytochrome c oxidoreductase (cytochrome b-c1 complex, complex III, CIII), resulting in different assemblies (supercomplex SCI(1)III(2)IV(1) and megacomplex MCI(2)III(2)IV(2)). Found in a complex with TMEM177, COA6, COX18, COX20, SCO1 and SCO2. Interacts with TMEM177 in a COX20-dependent manner. Interacts with COX20. Interacts with COX16. Requires Cu cation as cofactor.

It localises to the mitochondrion inner membrane. It carries out the reaction 4 Fe(II)-[cytochrome c] + O2 + 8 H(+)(in) = 4 Fe(III)-[cytochrome c] + 2 H2O + 4 H(+)(out). Component of the cytochrome c oxidase, the last enzyme in the mitochondrial electron transport chain which drives oxidative phosphorylation. The respiratory chain contains 3 multisubunit complexes succinate dehydrogenase (complex II, CII), ubiquinol-cytochrome c oxidoreductase (cytochrome b-c1 complex, complex III, CIII) and cytochrome c oxidase (complex IV, CIV), that cooperate to transfer electrons derived from NADH and succinate to molecular oxygen, creating an electrochemical gradient over the inner membrane that drives transmembrane transport and the ATP synthase. Cytochrome c oxidase is the component of the respiratory chain that catalyzes the reduction of oxygen to water. Electrons originating from reduced cytochrome c in the intermembrane space (IMS) are transferred via the dinuclear copper A center (CU(A)) of subunit 2 and heme A of subunit 1 to the active site in subunit 1, a binuclear center (BNC) formed by heme A3 and copper B (CU(B)). The BNC reduces molecular oxygen to 2 water molecules using 4 electrons from cytochrome c in the IMS and 4 protons from the mitochondrial matrix. The protein is Cytochrome c oxidase subunit 2 (MT-CO2) of Gerbilliscus robustus (Fringe-tailed gerbil).